The primary structure comprises 771 residues: Probable exo-1,4-beta-xylosidase bxlB (771 aa).

A signal peptide spans 1 to 25 (MVGLTPQHYGNAIALMTYLASTALA). N-linked (GlcNAc...) asparagine glycosylation occurs at Asn67. Residue Asp293 is part of the active site. N-linked (GlcNAc...) asparagine glycosylation is found at Asn305, Asn345, Asn423, Asn462, and Asn463.

The protein belongs to the glycosyl hydrolase 3 family.

It localises to the secreted. It carries out the reaction Hydrolysis of (1-&gt;4)-beta-D-xylans, to remove successive D-xylose residues from the non-reducing termini.. Its pathway is glycan degradation; xylan degradation. In terms of biological role, xylan 1,4-beta-xylosidase involved in the hydrolysis of xylan, a major structural heterogeneous polysaccharide found in plant biomass representing the second most abundant polysaccharide in the biosphere, after cellulose. This is Probable exo-1,4-beta-xylosidase bxlB (bxlB) from Aspergillus clavatus (strain ATCC 1007 / CBS 513.65 / DSM 816 / NCTC 3887 / NRRL 1 / QM 1276 / 107).